The sequence spans 339 residues: MQKEAVRDAANLPSIRSLVRAVGFEGRSLHSINDLTNDQIYALFELARALEPFHRSSVDLLRGSVMVTLFFQPSTRTRMSFETAMHRLGGAVVTEANPLVSSSAAKEESLADTMRTISKYANVIVLRHPDDVAAREGASYSESPVINGGWGDWEHPTQALLDLYTLWRTHGGVEGAKVVVATPDMVHARTGHSMAYGLARLGAEVTLASRSDYRAPEEVIEGLRRVEGAKVREVFDLDQDGFNDLVSEMDLVYLPGCSAPKGEAAEEFKKMMDEYYVRLETLEKVRESEGRIIRVTHTLPRRPGEMDLRIDDTPHQQYFEAIAYSVAIRMALVAAIVGA.

It belongs to the aspartate/ornithine carbamoyltransferase superfamily. In terms of assembly, homodimer.

It catalyses the reaction (S)-2-ureidoglycine + carbamoyl phosphate = allantoate + phosphate + H(+). It functions in the pathway purine metabolism. Functionally, catalyzes the phosphorolysis of allantoate to ureidoglycine and carbamoyl phosphate. Is likely involved in a purine degradation pathway. The polypeptide is Ureidoglycine carbamoyltransferase (Rubrobacter xylanophilus (strain DSM 9941 / JCM 11954 / NBRC 16129 / PRD-1)).